Here is a 302-residue protein sequence, read N- to C-terminus: 4-hydroxy-tetrahydrodipicolinate synthase (302 aa).

Thr-56 contacts pyruvate. Tyr-145 serves as the catalytic Proton donor/acceptor. Lys-173 acts as the Schiff-base intermediate with substrate in catalysis. Position 215 (Val-215) interacts with pyruvate.

It belongs to the DapA family. In terms of assembly, homotetramer; dimer of dimers.

The protein resides in the cytoplasm. It carries out the reaction L-aspartate 4-semialdehyde + pyruvate = (2S,4S)-4-hydroxy-2,3,4,5-tetrahydrodipicolinate + H2O + H(+). The protein operates within amino-acid biosynthesis; L-lysine biosynthesis via DAP pathway; (S)-tetrahydrodipicolinate from L-aspartate: step 3/4. Its function is as follows. Catalyzes the condensation of (S)-aspartate-beta-semialdehyde [(S)-ASA] and pyruvate to 4-hydroxy-tetrahydrodipicolinate (HTPA). The sequence is that of 4-hydroxy-tetrahydrodipicolinate synthase from Prochlorococcus marinus subsp. pastoris (strain CCMP1986 / NIES-2087 / MED4).